A 150-amino-acid chain; its full sequence is Protein A151R (150 aa).

Belongs to the asfivirus A151R family. In terms of assembly, monomer. Homodimer. Interacts with protein B119L. Interacts with membrane protein E248R. Requires Zn(2+) as cofactor.

May participate in a redox cascade for the formation of disulfide bonds in viral proteins. The chain is Protein A151R from African swine fever virus (isolate Tick/Malawi/Lil 20-1/1983) (ASFV).